We begin with the raw amino-acid sequence, 104 residues long: UPF0145 protein STH1265 (104 aa).

The protein belongs to the UPF0145 family.

The polypeptide is UPF0145 protein STH1265 (Symbiobacterium thermophilum (strain DSM 24528 / JCM 14929 / IAM 14863 / T)).